A 310-amino-acid chain; its full sequence is U-megalopygitoxin(8)-Mo15 (310 aa).

The first 27 residues, 1-27, serve as a signal peptide directing secretion; sequence MARFSSKNLTKLFQYLVLSLLSPVAFG.

This sequence belongs to the megalysin family. In terms of processing, contains 3 disulfide bonds. Expressed by the venom apparatus.

Its subcellular location is the secreted. It is found in the target cell membrane. Its function is as follows. May function as a large pore-forming protein. In Megalopyge opercularis (Southern flannel moth), this protein is U-megalopygitoxin(8)-Mo15.